The following is an 862-amino-acid chain: MKPRPYSVFLFLHIVFYSLLSAVNGSPSLDYFETCSNFVPRAGIPTFSPYAVIKNFDEVNRMYYIQVVGNLSGVITIVGGNGSHIHAASVYSETYALGKLVTSNTTKLCDVVMDPHSFEVPIKCPWAAGSAAFMVKVPFKSTLSDYSKYELTTLTTRVIVVDGTPEKNVITCMKFGLSTTLYYFYPVISYLVVVSLAYVSFSIIYALFLNPWTGSLDPFKSIFNFNMDPDALRLTSLGFFDFVQYLQFAVSTAQVSVMFPKFYINIMAALSWGTALFRFPIFSEPAEYQFADFADLSVASSSYADYLPKSYGMYSFLDSIGIGTACWLPFLIVMVIYLFAALFVALLVIFLKWLMSRIFNETIAETRWDTWSFIAGSLIRLYFLTYFPTVAYMSFQFVAPPTGYEIIPVLWFIFFGIFIPVYLYMNLAFVEPSSKLLEDQTYLHLFGSIYNSFREERVMFWIFPIAVQFMRGITVGVIGSSGSAQLAIFFILEVANVVAYAYVRPHFPQTSMNTLNTFISTMRLITVILMIPLDPRLKVLGISRDLLAYAILFIHIMVCILFLLLSTQRFMEVSARLLGAKSESKGVPLDRPFGWARVFGINELRRRRLKDPYSNGNTMMFDHSTYNSNEMSVPLTPVSVCSNSLKKDGEAAPPKLFVQTNCIPPVTQASSLVPSKNNTASSSSLMLDSPVTPSSPYSTSQGYSFYRPPKPKSSVRKRDMDQLRALQLDFLNNKPNLLRHDVNYAVREADVYHPHVDTSIDSLSQISSQPFEMRPTAIPPPPKNAFQRAWQIVQSTAKSIWHSDPPKESEKGFVVLRSRPRPNLQKPLPQLHIEPSRDEQYSMERKKTDDSLAESAWSIPHP.

A signal peptide spans 1 to 25 (MKPRPYSVFLFLHIVFYSLLSAVNG). Over 26–61 (SPSLDYFETCSNFVPRAGIPTFSPYAVIKNFDEVNR) the chain is Lumenal. A helical transmembrane segment spans residues 62-82 (MYYIQVVGNLSGVITIVGGNG). Residues 83–187 (SHIHAASVYS…STTLYYFYPV (105 aa)) lie on the Cytoplasmic side of the membrane. The helical transmembrane segment at 188-208 (ISYLVVVSLAYVSFSIIYALF) threads the bilayer. Residues 209–230 (LNPWTGSLDPFKSIFNFNMDPD) are Lumenal-facing. The helical transmembrane segment at 231–250 (ALRLTSLGFFDFVQYLQFAV) threads the bilayer. The Cytoplasmic segment spans residues 251–256 (STAQVS). The helical transmembrane segment at 257 to 277 (VMFPKFYINIMAALSWGTALF) threads the bilayer. Residues 278–329 (RFPIFSEPAEYQFADFADLSVASSSYADYLPKSYGMYSFLDSIGIGTACWLP) are Lumenal-facing. The helical transmembrane segment at 330–350 (FLIVMVIYLFAALFVALLVIF) threads the bilayer. The Cytoplasmic portion of the chain corresponds to 351–372 (LKWLMSRIFNETIAETRWDTWS). A helical transmembrane segment spans residues 373 to 393 (FIAGSLIRLYFLTYFPTVAYM). Over 394–404 (SFQFVAPPTGY) the chain is Lumenal. The helical transmembrane segment at 405–425 (EIIPVLWFIFFGIFIPVYLYM) threads the bilayer. Over 426-457 (NLAFVEPSSKLLEDQTYLHLFGSIYNSFREER) the chain is Cytoplasmic. The chain crosses the membrane as a helical span at residues 458–480 (VMFWIFPIAVQFMRGITVGVIGS). At 481 to 483 (SGS) the chain is on the lumenal side. A helical transmembrane segment spans residues 484–503 (AQLAIFFILEVANVVAYAYV). The Cytoplasmic segment spans residues 504 to 514 (RPHFPQTSMNT). The helical transmembrane segment at 515 to 535 (LNTFISTMRLITVILMIPLDP) threads the bilayer. At 536-545 (RLKVLGISRD) the chain is on the lumenal side. Residues 546–566 (LLAYAILFIHIMVCILFLLLS) traverse the membrane as a helical segment. At 567-862 (TQRFMEVSAR…AESAWSIPHP (296 aa)) the chain is on the cytoplasmic side. Polar residues predominate over residues 668–686 (QASSLVPSKNNTASSSSLM). Disordered regions lie at residues 668–717 (QASS…SVRK) and 815–862 (VLRS…IPHP). A compositionally biased stretch (low complexity) spans 689–700 (SPVTPSSPYSTS). A compositionally biased stretch (basic and acidic residues) spans 834-850 (EPSRDEQYSMERKKTDD).

The protein belongs to the transient receptor potential (TRP) ion channel family.

Its subcellular location is the cytoplasm. It is found in the golgi apparatus membrane. This is an uncharacterized protein from Schizosaccharomyces pombe (strain 972 / ATCC 24843) (Fission yeast).